The sequence spans 658 residues: A-type ATP synthase subunit I (658 aa).

The next 7 helical transmembrane spans lie at 383–403 (MAFV…YGII), 427–447 (IIMM…NGFI), 475–495 (ILIM…ILGA), 507–526 (ALGS…LYLV), 530–552 (IFGA…LFGL), 568–588 (LLAL…LTGL), and 591–611 (EMIP…GHIA).

Belongs to the V-ATPase 116 kDa subunit family. As to quaternary structure, has multiple subunits with at least A(3), B(3), C, D, E, F, H, I and proteolipid K(x).

The protein localises to the cell membrane. Component of the A-type ATP synthase that produces ATP from ADP in the presence of a proton gradient across the membrane. This chain is A-type ATP synthase subunit I, found in Methanothermobacter thermautotrophicus (strain ATCC 29096 / DSM 1053 / JCM 10044 / NBRC 100330 / Delta H) (Methanobacterium thermoautotrophicum).